The sequence spans 106 residues: L-rhamnose mutarotase (106 aa).

Tyrosine 20 contacts substrate. The active-site Proton donor is histidine 24. Substrate-binding positions include tyrosine 43 and 78-79 (WW).

This sequence belongs to the rhamnose mutarotase family. Homodimer.

It is found in the cytoplasm. The catalysed reaction is alpha-L-rhamnose = beta-L-rhamnose. The protein operates within carbohydrate metabolism; L-rhamnose metabolism. In terms of biological role, involved in the anomeric conversion of L-rhamnose. This is L-rhamnose mutarotase from Brucella anthropi (strain ATCC 49188 / DSM 6882 / CCUG 24695 / JCM 21032 / LMG 3331 / NBRC 15819 / NCTC 12168 / Alc 37) (Ochrobactrum anthropi).